Consider the following 165-residue polypeptide: Nucleotide-binding protein PMT9312_0481 (165 aa).

The protein belongs to the YajQ family.

Nucleotide-binding protein. This chain is Nucleotide-binding protein PMT9312_0481, found in Prochlorococcus marinus (strain MIT 9312).